A 548-amino-acid polypeptide reads, in one-letter code: C-type lectin domain family 4 member F (548 aa).

The Cytoplasmic segment spans residues 1 to 42 (MKEAELNRDMARYCTDNQCVSLQPQGLGPKSAALMAPRTLRH). A helical; Signal-anchor for type II membrane protein membrane pass occupies residues 43–69 (VQVILALMVVTVIFSLLALFVVASQPW). Topologically, residues 70–548 (RPEWNKEPPS…STGWSAARVG (479 aa)) are extracellular. 6 N-linked (GlcNAc...) asparagine glycosylation sites follow: Asn-86, Asn-92, Asn-115, Asn-132, Asn-209, and Asn-255. One can recognise a C-type lectin domain in the interval 438-538 (KFCTSQGAHL…GSSYPWVCKK (101 aa)). 2 disulfides stabilise this stretch: Cys-440/Cys-536 and Cys-516/Cys-528.

In terms of tissue distribution, kupffer cells.

It is found in the membrane. Its function is as follows. Receptor with an affinity for galactose and fucose. Could be involved in endocytosis. The polypeptide is C-type lectin domain family 4 member F (Clec4f) (Mus musculus (Mouse)).